A 513-amino-acid polypeptide reads, in one-letter code: ATP synthase subunit alpha 2 (513 aa).

169 to 176 (GDRQTGKT) is a binding site for ATP.

It belongs to the ATPase alpha/beta chains family. As to quaternary structure, F-type ATPases have 2 components, CF(1) - the catalytic core - and CF(0) - the membrane proton channel. CF(1) has five subunits: alpha(3), beta(3), gamma(1), delta(1), epsilon(1). CF(0) has three main subunits: a(1), b(2) and c(9-12). The alpha and beta chains form an alternating ring which encloses part of the gamma chain. CF(1) is attached to CF(0) by a central stalk formed by the gamma and epsilon chains, while a peripheral stalk is formed by the delta and b chains.

Its subcellular location is the cell inner membrane. The enzyme catalyses ATP + H2O + 4 H(+)(in) = ADP + phosphate + 5 H(+)(out). Functionally, produces ATP from ADP in the presence of a proton gradient across the membrane. The alpha chain is a regulatory subunit. In Photobacterium profundum (strain SS9), this protein is ATP synthase subunit alpha 2.